The primary structure comprises 717 residues: Asp/Glu-specific dipeptidyl-peptidase (717 aa).

The signal sequence occupies residues 1 to 21 (MNKRFFPTLLLAFVCSTLAYA). Catalysis depends on charge relay system residues His-85, Asp-226, and Ser-652.

It belongs to the peptidase S46 family.

Its subcellular location is the secreted. The protein localises to the cell surface. Its activity is regulated as follows. Enzyme activity is completely blocked by diisopropyl-fluorophosphates, moderately by phenylmethylsulfonyl fluoride (PMSF) and 4-(2-methyl)benzenesulfonyl fluoride, and slightly by pepstatin in vitro. Functionally, catalyzes the removal of dipeptides from the N-terminus of oligopeptides. Shows a strict specificity for acidic residues (Asp or Glu) in the P1 position, and has a hydrophobic residue preference at the P2 position. Is likely involved in amino acid metabolism and bacterial growth/survival of asaccharolytic P.endodontalis, that utilizes amino acids from extracellular proteinaceous nutrients as energy and carbon sources. This is Asp/Glu-specific dipeptidyl-peptidase (dpp11) from Porphyromonas endodontalis (strain ATCC 35406 / DSM 24491 / JCM 8526 / CCUG 16442 / BCRC 14492 / NCTC 13058 / HG 370) (Bacteroides endodontalis).